The chain runs to 154 residues: MKLNELSDCKGAIRNRKRVGRGIGSGTGKTGGRGVKGQRSRSGVSLNGFEGGQMPIYRRLPKRGFRNFFAKDYNEVSLGRIQSAIDTGKLNIEKPVDIIALKEAGIIRRVKDGVRLLSDGELKVKISFNVSYASKAARLKIEKAGGQVHFPETV.

Residues 17 to 44 (KRVGRGIGSGTGKTGGRGVKGQRSRSGV) are disordered. Positions 21–35 (RGIGSGTGKTGGRGV) are enriched in gly residues.

It belongs to the universal ribosomal protein uL15 family. Part of the 50S ribosomal subunit.

In terms of biological role, binds to the 23S rRNA. The chain is Large ribosomal subunit protein uL15 from Bartonella henselae (strain ATCC 49882 / DSM 28221 / CCUG 30454 / Houston 1) (Rochalimaea henselae).